Reading from the N-terminus, the 388-residue chain is F-box protein At3g49510 (388 aa).

An F-box domain is found at Met-1 to Thr-47.

This is F-box protein At3g49510 from Arabidopsis thaliana (Mouse-ear cress).